The sequence spans 271 residues: Phosphate import ATP-binding protein PstB (271 aa).

Residues 24-266 (MIGQDVSVYY…PDDPRTQDYI (243 aa)) form the ABC transporter domain. 56–63 (GPSGCGKS) is a binding site for ATP.

Belongs to the ABC transporter superfamily. Phosphate importer (TC 3.A.1.7) family. The complex is composed of two ATP-binding proteins (PstB), two transmembrane proteins (PstC and PstA) and a solute-binding protein (PstS).

The protein localises to the cell inner membrane. It carries out the reaction phosphate(out) + ATP + H2O = ADP + 2 phosphate(in) + H(+). Part of the ABC transporter complex PstSACB involved in phosphate import. Responsible for energy coupling to the transport system. The polypeptide is Phosphate import ATP-binding protein PstB (Rhizobium etli (strain ATCC 51251 / DSM 11541 / JCM 21823 / NBRC 15573 / CFN 42)).